A 53-amino-acid polypeptide reads, in one-letter code: UPF0391 membrane protein Bcep18194_C7021 (53 aa).

Transmembrane regions (helical) follow at residues 5–25 (AVIF…GIAA) and 30–50 (IAKI…LLGV).

This sequence belongs to the UPF0391 family.

The protein localises to the cell membrane. The sequence is that of UPF0391 membrane protein Bcep18194_C7021 from Burkholderia lata (strain ATCC 17760 / DSM 23089 / LMG 22485 / NCIMB 9086 / R18194 / 383).